Here is a 462-residue protein sequence, read N- to C-terminus: Threonine--tRNA ligase, mitochondrial (462 aa).

Residues 1-45 (MKIQLVRWHCSRNALWNRAFYSTRKATKNASSATPATMTSMVSQR) constitute a mitochondrion transit peptide.

Belongs to the class-II aminoacyl-tRNA synthetase family.

The protein resides in the mitochondrion matrix. The catalysed reaction is tRNA(Thr) + L-threonine + ATP = L-threonyl-tRNA(Thr) + AMP + diphosphate + H(+). The sequence is that of Threonine--tRNA ligase, mitochondrial (MST1) from Saccharomyces cerevisiae (strain ATCC 204508 / S288c) (Baker's yeast).